Here is a 171-residue protein sequence, read N- to C-terminus: MEERGDSEPTPGCSGLGPGGVRGFGDGGGAPSWAPEDAWMGTHPKYLEMMELDIGDATQVYVAFLVYLDLMESKSWHEVNCVGLPELQLICLVGTEIEGEGLQTVVPTPITASLSHNRIREILKASRKLQGDPDLPMSFTLAIVESDSTIVYYKLTDGFMLPDPQNISLRR.

Residues M1–P35 form a disordered region. S7 carries the post-translational modification Phosphoserine. The segment covering S14–A30 has biased composition (gly residues). S168 is subject to Phosphoserine.

Belongs to the SEN15 family. Homodimer. tRNA splicing endonuclease is a heterotetramer composed of TSEN2, TSEN15, TSEN34/LENG5 and TSEN54. tRNA splicing endonuclease complex also contains proteins of the Pre-mRNA 3' end processing machinery, such as CLP1, CPSF1, CPSF4 and CSTF2. In terms of tissue distribution, widely expressed. Highly expressed in testis and uterus.

The protein resides in the nucleus. It localises to the nucleolus. Its function is as follows. Non-catalytic subunit of the tRNA-splicing endonuclease complex, a complex responsible for identification and cleavage of the splice sites in pre-tRNA. It cleaves pre-tRNA at the 5' and 3' splice sites to release the intron. The products are an intron and two tRNA half-molecules bearing 2',3' cyclic phosphate and 5'-OH termini. There are no conserved sequences at the splice sites, but the intron is invariably located at the same site in the gene, placing the splice sites an invariant distance from the constant structural features of the tRNA body. The tRNA splicing endonuclease is also involved in mRNA processing via its association with pre-mRNA 3'-end processing factors, establishing a link between pre-tRNA splicing and pre-mRNA 3'-end formation, suggesting that the endonuclease subunits function in multiple RNA-processing events. This is tRNA-splicing endonuclease subunit Sen15 (TSEN15) from Homo sapiens (Human).